The sequence spans 355 residues: Phospho-N-acetylmuramoyl-pentapeptide-transferase (355 aa).

10 helical membrane-spanning segments follow: residues 3–23 (GVLI…PWVI), 56–76 (VIIV…GIGF), 80–100 (GLLV…DDYI), 120–140 (AAVA…AGLL), 156–176 (VGII…SNAV), 185–205 (LAAG…FWQF), 224–244 (PLDV…FLWW), 251–271 (IFMG…IAIV), 276–296 (LLLV…MIQV), and 330–350 (FWIV…AEFL).

It belongs to the glycosyltransferase 4 family. MraY subfamily. Mg(2+) is required as a cofactor.

It is found in the cell membrane. The enzyme catalyses UDP-N-acetyl-alpha-D-muramoyl-L-alanyl-gamma-D-glutamyl-meso-2,6-diaminopimeloyl-D-alanyl-D-alanine + di-trans,octa-cis-undecaprenyl phosphate = di-trans,octa-cis-undecaprenyl diphospho-N-acetyl-alpha-D-muramoyl-L-alanyl-D-glutamyl-meso-2,6-diaminopimeloyl-D-alanyl-D-alanine + UMP. Its pathway is cell wall biogenesis; peptidoglycan biosynthesis. Functionally, catalyzes the initial step of the lipid cycle reactions in the biosynthesis of the cell wall peptidoglycan: transfers peptidoglycan precursor phospho-MurNAc-pentapeptide from UDP-MurNAc-pentapeptide onto the lipid carrier undecaprenyl phosphate, yielding undecaprenyl-pyrophosphoryl-MurNAc-pentapeptide, known as lipid I. This is Phospho-N-acetylmuramoyl-pentapeptide-transferase from Frankia casuarinae (strain DSM 45818 / CECT 9043 / HFP020203 / CcI3).